We begin with the raw amino-acid sequence, 485 residues long: NADH-quinone oxidoreductase subunit N (485 aa).

Helical transmembrane passes span leucine 8–isoleucine 28, phenylalanine 35–valine 55, glycine 71–alanine 91, phenylalanine 105–leucine 125, alanine 127–phenylalanine 147, tyrosine 159–alanine 179, leucine 203–phenylalanine 223, proline 235–methionine 255, valine 271–glutamine 291, leucine 297–glutamine 317, valine 326–leucine 346, alanine 373–isoleucine 393, tryptophan 408–valine 430, and isoleucine 455–isoleucine 475.

The protein belongs to the complex I subunit 2 family. As to quaternary structure, NDH-1 is composed of 13 different subunits. Subunits NuoA, H, J, K, L, M, N constitute the membrane sector of the complex.

It is found in the cell inner membrane. The catalysed reaction is a quinone + NADH + 5 H(+)(in) = a quinol + NAD(+) + 4 H(+)(out). Its function is as follows. NDH-1 shuttles electrons from NADH, via FMN and iron-sulfur (Fe-S) centers, to quinones in the respiratory chain. The immediate electron acceptor for the enzyme in this species is believed to be ubiquinone. Couples the redox reaction to proton translocation (for every two electrons transferred, four hydrogen ions are translocated across the cytoplasmic membrane), and thus conserves the redox energy in a proton gradient. In Salmonella typhimurium (strain LT2 / SGSC1412 / ATCC 700720), this protein is NADH-quinone oxidoreductase subunit N.